A 436-amino-acid polypeptide reads, in one-letter code: Carboxypeptidase A5 (436 aa).

The signal sequence occupies residues 1–33 (MQGTPAGGTSPGPSPMDRQTLLVFSLILAAALG). A propeptide spans 34 to 126 (QMNFTGDQVL…EREAMAKSRR (93 aa)) (activation peptide). The region spanning 138 to 431 (SYHTLEEISS…MALRTIMEHT (294 aa)) is the Peptidase M14 domain. 2 residues coordinate Zn(2+): H196 and E199. Residues 196 to 199 (HSRE), R254, and 271 to 272 (NR) each bind substrate. An intrachain disulfide couples C265 to C288. Zn(2+) is bound at residue H323. Residues 324–325 (SY) and Y375 each bind substrate. E397 acts as the Proton donor/acceptor in catalysis.

This sequence belongs to the peptidase M14 family. The cofactor is Zn(2+).

It localises to the secreted. This is Carboxypeptidase A5 (CPA5) from Macaca fascicularis (Crab-eating macaque).